We begin with the raw amino-acid sequence, 1324 residues long: Coiled-coil domain-containing protein 171 (1324 aa).

5 coiled-coil regions span residues Lys29–His296, Ala325–Tyr393, Phe453–Asp521, Ser599–Asn712, and Phe981–Val1145. The segment covering Pro1301–Val1312 has biased composition (polar residues). Positions Pro1301 to Leu1324 are disordered.

In Mus musculus (Mouse), this protein is Coiled-coil domain-containing protein 171 (Ccdc171).